The chain runs to 477 residues: Glutamyl-tRNA reductase (477 aa).

Substrate is bound by residues 49–52, Ser-109, 114–116, and Gln-120; these read TCNR and EGQ. Cys-50 acts as the Nucleophile in catalysis. 221-226 contacts NADP(+); it reads GAGSMS.

Belongs to the glutamyl-tRNA reductase family. As to quaternary structure, homodimer.

It carries out the reaction (S)-4-amino-5-oxopentanoate + tRNA(Glu) + NADP(+) = L-glutamyl-tRNA(Glu) + NADPH + H(+). It functions in the pathway porphyrin-containing compound metabolism; protoporphyrin-IX biosynthesis; 5-aminolevulinate from L-glutamyl-tRNA(Glu): step 1/2. In terms of biological role, catalyzes the NADPH-dependent reduction of glutamyl-tRNA(Glu) to glutamate 1-semialdehyde (GSA). In Thermobifida fusca (strain YX), this protein is Glutamyl-tRNA reductase.